Consider the following 111-residue polypeptide: uncharacterized protein (111 aa).

A helical transmembrane segment spans residues 81-101 (YFFLLFYVSFPHIFLGLFFFI).

It is found in the membrane. This is an uncharacterized protein from Schizosaccharomyces pombe (strain 972 / ATCC 24843) (Fission yeast).